A 144-amino-acid polypeptide reads, in one-letter code: Large ribosomal subunit protein uL15 (144 aa).

Over residues 1–16 the composition is skewed to basic residues; the sequence is MVVRKEKKSRKYRGYR. The interval 1-35 is disordered; that stretch reads MVVRKEKKSRKYRGYRTHGWGTKGQHRDRGAQGGR.

This sequence belongs to the universal ribosomal protein uL15 family. Part of the 50S ribosomal subunit.

In terms of biological role, binds to the 23S rRNA. This Sulfolobus acidocaldarius (strain ATCC 33909 / DSM 639 / JCM 8929 / NBRC 15157 / NCIMB 11770) protein is Large ribosomal subunit protein uL15.